A 207-amino-acid polypeptide reads, in one-letter code: Small ribosomal subunit protein uS4 (207 aa).

The segment at 31–55 is disordered; the sequence is KCKLDSKPGQHGRTSGARTSDYGTQ. Polar residues predominate over residues 42–53; sequence GRTSGARTSDYG. The 64-residue stretch at 97-160 folds into the S4 RNA-binding domain; that stretch reads SRLDNVVYRM…KKQARIIEAL (64 aa).

The protein belongs to the universal ribosomal protein uS4 family. As to quaternary structure, part of the 30S ribosomal subunit. Contacts protein S5. The interaction surface between S4 and S5 is involved in control of translational fidelity.

Its function is as follows. One of the primary rRNA binding proteins, it binds directly to 16S rRNA where it nucleates assembly of the body of the 30S subunit. With S5 and S12 plays an important role in translational accuracy. This chain is Small ribosomal subunit protein uS4, found in Burkholderia multivorans (strain ATCC 17616 / 249).